Consider the following 177-residue polypeptide: SsrA-binding protein (177 aa).

2 disordered regions span residues 1–23 (MYVP…KDGK) and 148–177 (YDKR…QRGE). The span at 148–165 (YDKRQTLREKQDRRESDR) shows a compositional bias: basic and acidic residues.

It belongs to the SmpB family.

Its subcellular location is the cytoplasm. Required for rescue of stalled ribosomes mediated by trans-translation. Binds to transfer-messenger RNA (tmRNA), required for stable association of tmRNA with ribosomes. tmRNA and SmpB together mimic tRNA shape, replacing the anticodon stem-loop with SmpB. tmRNA is encoded by the ssrA gene; the 2 termini fold to resemble tRNA(Ala) and it encodes a 'tag peptide', a short internal open reading frame. During trans-translation Ala-aminoacylated tmRNA acts like a tRNA, entering the A-site of stalled ribosomes, displacing the stalled mRNA. The ribosome then switches to translate the ORF on the tmRNA; the nascent peptide is terminated with the 'tag peptide' encoded by the tmRNA and targeted for degradation. The ribosome is freed to recommence translation, which seems to be the essential function of trans-translation. This is SsrA-binding protein from Streptomyces avermitilis (strain ATCC 31267 / DSM 46492 / JCM 5070 / NBRC 14893 / NCIMB 12804 / NRRL 8165 / MA-4680).